A 293-amino-acid chain; its full sequence is Protease HtpX (293 aa).

2 helical membrane passes run 4-24 and 34-54; these read IALF…VLSL and GLMI…LLMS. His-139 contacts Zn(2+). The active site involves Glu-140. His-143 is a Zn(2+) binding site. The next 2 helical transmembrane spans lie at 158 to 178 and 193 to 213; these read VVNT…AGFM and LIYF…ASII. Glu-222 lines the Zn(2+) pocket.

Belongs to the peptidase M48B family. The cofactor is Zn(2+).

The protein resides in the cell inner membrane. This is Protease HtpX from Escherichia fergusonii (strain ATCC 35469 / DSM 13698 / CCUG 18766 / IAM 14443 / JCM 21226 / LMG 7866 / NBRC 102419 / NCTC 12128 / CDC 0568-73).